The sequence spans 211 residues: Large ribosomal subunit protein uL3 (211 aa).

Glutamine 150 is modified (N5-methylglutamine).

This sequence belongs to the universal ribosomal protein uL3 family. As to quaternary structure, part of the 50S ribosomal subunit. Forms a cluster with proteins L14 and L19. Post-translationally, methylated by PrmB.

Functionally, one of the primary rRNA binding proteins, it binds directly near the 3'-end of the 23S rRNA, where it nucleates assembly of the 50S subunit. In Pseudomonas fluorescens (strain Pf0-1), this protein is Large ribosomal subunit protein uL3.